A 240-amino-acid chain; its full sequence is Fatty acid metabolism regulator protein (240 aa).

The region spanning 6-74 is the HTH gntR-type domain; it reads KGPASFAEKY…HGKPTRVNNF (69 aa). The segment at residues 34 to 53 is a DNA-binding region (H-T-H motif); the sequence is ERELSELIGVTRTTLREVLQ.

As to quaternary structure, homodimer.

It localises to the cytoplasm. Functionally, multifunctional regulator of fatty acid metabolism. The polypeptide is Fatty acid metabolism regulator protein (Shewanella amazonensis (strain ATCC BAA-1098 / SB2B)).